The sequence spans 206 residues: LexA repressor (206 aa).

Residues 28-48 constitute a DNA-binding region (H-T-H motif); the sequence is VREIGEAVGLASSSTVHGHLD. Residues serine 128 and lysine 166 each act as for autocatalytic cleavage activity in the active site.

This sequence belongs to the peptidase S24 family. In terms of assembly, homodimer.

It carries out the reaction Hydrolysis of Ala-|-Gly bond in repressor LexA.. Its function is as follows. Represses a number of genes involved in the response to DNA damage (SOS response), including recA and lexA. In the presence of single-stranded DNA, RecA interacts with LexA causing an autocatalytic cleavage which disrupts the DNA-binding part of LexA, leading to derepression of the SOS regulon and eventually DNA repair. In Exiguobacterium sp. (strain ATCC BAA-1283 / AT1b), this protein is LexA repressor.